A 600-amino-acid chain; its full sequence is Pentatricopeptide repeat-containing protein At3g29230 (600 aa).

13 PPR repeats span residues 50–80 (DLHIAPKLISALSLCRQTNLAVRVFNQVQEP), 81–115 (NVHLCNSLIRAHAQNSQPYQAFFVFSEMQRFGLFA), 116–150 (DNFTYPFLLKACSGQSWLPVVKMMHNHIEKLGLSS), 151–183 (DIYVPNALIDCYSRCGGLGVRDAMKLFEKMSER), 184–218 (DTVSWNSMLGGLVKAGELRDARRLFDEMPQRDLIS), 219–245 (WNTMLDGYARCREMSKAFELFEKMPER), 246–276 (NTVSWSTMVMGYSKAGDMEMARVMFDKMPLP), 279–313 (NVVTWTIIIAGYAEKGLLKEADRLVDQMVASGLKF), 314–348 (DAAAVISILAACTESGLLSLGMRIHSILKRSNLGS), 349–379 (NAYVLNALLDMYAKCGNLKKAFDVFNDIPKK), 380–414 (DLVSWNTMLHGLGVHGHGKEAIELFSRMRREGIRP), 415–445 (DKVTFIAVLCSCNHAGLIDEGIDYFYSMEKV), and 451–481 (QVEHYGCLVDLLGRVGRLKEAIKVVQTMPME). Residues 486–561 (IWGALLGACR…PSGASSVELE (76 aa)) are type E motif. A type E(+) motif region spans residues 562–592 (DGIHEFTVFDKSHPKSDQIYQMLGSLIEPPD).

This sequence belongs to the PPR family. PCMP-E subfamily.

This Arabidopsis thaliana (Mouse-ear cress) protein is Pentatricopeptide repeat-containing protein At3g29230 (PCMP-E27).